Here is a 494-residue protein sequence, read N- to C-terminus: UPF0371 protein SP_0341 (494 aa).

It belongs to the UPF0371 family.

The chain is UPF0371 protein SP_0341 from Streptococcus pneumoniae serotype 4 (strain ATCC BAA-334 / TIGR4).